The chain runs to 414 residues: Argininosuccinate synthase (414 aa).

Residues 15 to 23 (AYSGGLDTS) and A42 each bind ATP. L-citrulline contacts are provided by Y93 and S98. Residue G123 participates in ATP binding. L-aspartate contacts are provided by T125, N129, and D130. Position 129 (N129) interacts with L-citrulline. Positions 133, 182, 191, 267, and 279 each coordinate L-citrulline.

It belongs to the argininosuccinate synthase family. Type 1 subfamily. In terms of assembly, homotetramer.

It is found in the cytoplasm. The enzyme catalyses L-citrulline + L-aspartate + ATP = 2-(N(omega)-L-arginino)succinate + AMP + diphosphate + H(+). Its pathway is amino-acid biosynthesis; L-arginine biosynthesis; L-arginine from L-ornithine and carbamoyl phosphate: step 2/3. The chain is Argininosuccinate synthase from Deinococcus geothermalis (strain DSM 11300 / CIP 105573 / AG-3a).